Here is a 60-residue protein sequence, read N- to C-terminus: Large ribosomal subunit protein bL32 (60 aa).

It belongs to the bacterial ribosomal protein bL32 family.

The chain is Large ribosomal subunit protein bL32 from Borrelia duttonii (strain Ly).